A 101-amino-acid chain; its full sequence is Phosphoribosyl-AMP cyclohydrolase (101 aa).

Position 71 (Asp-71) interacts with Mg(2+). Cys-72 provides a ligand contact to Zn(2+). Mg(2+) is bound by residues Asp-73 and Asp-75. Zn(2+) contacts are provided by Cys-88 and Cys-95.

Belongs to the PRA-CH family. Homodimer. Requires Mg(2+) as cofactor. Zn(2+) is required as a cofactor.

It localises to the cytoplasm. The enzyme catalyses 1-(5-phospho-beta-D-ribosyl)-5'-AMP + H2O = 1-(5-phospho-beta-D-ribosyl)-5-[(5-phospho-beta-D-ribosylamino)methylideneamino]imidazole-4-carboxamide. Its pathway is amino-acid biosynthesis; L-histidine biosynthesis; L-histidine from 5-phospho-alpha-D-ribose 1-diphosphate: step 3/9. Functionally, catalyzes the hydrolysis of the adenine ring of phosphoribosyl-AMP. This is Phosphoribosyl-AMP cyclohydrolase from Bacillus cereus (strain ATCC 14579 / DSM 31 / CCUG 7414 / JCM 2152 / NBRC 15305 / NCIMB 9373 / NCTC 2599 / NRRL B-3711).